The chain runs to 608 residues: Elongation factor 4 (608 aa).

Residues 11–193 (DHIRNFSIVA…AIVNRLPPPK (183 aa)) enclose the tr-type G domain. Residues 23-28 (DHGKST) and 140-143 (NKID) each bind GTP.

It belongs to the TRAFAC class translation factor GTPase superfamily. Classic translation factor GTPase family. LepA subfamily.

It localises to the cell inner membrane. The catalysed reaction is GTP + H2O = GDP + phosphate + H(+). Its function is as follows. Required for accurate and efficient protein synthesis under certain stress conditions. May act as a fidelity factor of the translation reaction, by catalyzing a one-codon backward translocation of tRNAs on improperly translocated ribosomes. Back-translocation proceeds from a post-translocation (POST) complex to a pre-translocation (PRE) complex, thus giving elongation factor G a second chance to translocate the tRNAs correctly. Binds to ribosomes in a GTP-dependent manner. The polypeptide is Elongation factor 4 (Agrobacterium fabrum (strain C58 / ATCC 33970) (Agrobacterium tumefaciens (strain C58))).